The chain runs to 254 residues: Small ribosomal subunit protein uS2 (254 aa).

This sequence belongs to the universal ribosomal protein uS2 family.

The sequence is that of Small ribosomal subunit protein uS2 from Borrelia recurrentis (strain A1).